A 246-amino-acid chain; its full sequence is Probable transcriptional regulatory protein CKO_01097 (246 aa).

Residues 1–20 form a disordered region; it reads MAGHSKWANTRHRKAAQDAK.

It belongs to the TACO1 family.

It is found in the cytoplasm. The chain is Probable transcriptional regulatory protein CKO_01097 from Citrobacter koseri (strain ATCC BAA-895 / CDC 4225-83 / SGSC4696).